The chain runs to 243 residues: 23S rRNA (guanosine-2'-O-)-methyltransferase RlmB (243 aa).

S-adenosyl-L-methionine contacts are provided by Gly-196, Ile-216, and Leu-225.

It belongs to the class IV-like SAM-binding methyltransferase superfamily. RNA methyltransferase TrmH family. RlmB subfamily. As to quaternary structure, homodimer.

It localises to the cytoplasm. The enzyme catalyses guanosine(2251) in 23S rRNA + S-adenosyl-L-methionine = 2'-O-methylguanosine(2251) in 23S rRNA + S-adenosyl-L-homocysteine + H(+). Functionally, specifically methylates the ribose of guanosine 2251 in 23S rRNA. This is 23S rRNA (guanosine-2'-O-)-methyltransferase RlmB from Salmonella typhimurium (strain LT2 / SGSC1412 / ATCC 700720).